We begin with the raw amino-acid sequence, 139 residues long: Coat protein TP2 (139 aa).

It is found in the virion. The sequence is that of Coat protein TP2 from Thermoproteus tenax virus 1 (strain KRA1) (TTV1).